The sequence spans 208 residues: Small ribosomal subunit protein uS4 (208 aa).

The S4 RNA-binding domain maps to 98 to 161 (LRLDNVVFRL…RKVVRISEAL (64 aa)).

It belongs to the universal ribosomal protein uS4 family. As to quaternary structure, part of the 30S ribosomal subunit. Contacts protein S5. The interaction surface between S4 and S5 is involved in control of translational fidelity.

In terms of biological role, one of the primary rRNA binding proteins, it binds directly to 16S rRNA where it nucleates assembly of the body of the 30S subunit. With S5 and S12 plays an important role in translational accuracy. The protein is Small ribosomal subunit protein uS4 of Anaeromyxobacter sp. (strain Fw109-5).